A 1210-amino-acid polypeptide reads, in one-letter code: Ice nucleation protein (1210 aa).

The octapeptide periodicity stretch occupies residues 165–1156; it reads AVYGSTLTGA…LSGGENSTLI (992 aa).

The protein belongs to the bacterial ice nucleation protein family.

Its subcellular location is the cell outer membrane. Functionally, ice nucleation proteins enable bacteria to nucleate crystallization in supercooled water. This is Ice nucleation protein (inaW) from Pseudomonas fluorescens.